A 296-amino-acid chain; its full sequence is NAD kinase (296 aa).

Aspartate 72 (proton acceptor) is an active-site residue. Residues 72–73, 146–147, arginine 157, lysine 174, aspartate 176, 187–192, and glutamine 247 contribute to the NAD(+) site; these read DG, ND, and TAYALS.

Belongs to the NAD kinase family. The cofactor is a divalent metal cation.

It is found in the cytoplasm. It catalyses the reaction NAD(+) + ATP = ADP + NADP(+) + H(+). Functionally, involved in the regulation of the intracellular balance of NAD and NADP, and is a key enzyme in the biosynthesis of NADP. Catalyzes specifically the phosphorylation on 2'-hydroxyl of the adenosine moiety of NAD to yield NADP. This chain is NAD kinase, found in Pseudomonas putida (strain W619).